Reading from the N-terminus, the 231-residue chain is MKRFVSVVALSGVVSLAGCVAPTPKPNDPYYAPVLPRTPLPSAANNGSIYQAGFEQNLYSDRKAFRVGDIITITLNERTQASKNANSQVAKNSKTGIGLTSLFGGSATTNNPLGGNDLSLDVGYSGDRATKGDSKAAQGNTLTGSITVTVADVLPNGIIAVRGEKWMTLNTGDELVRIAGLVRADDIATDNTVSSTRVADARITYSGTGSFADASQPGWFDRFFLSPLFPF.

Positions 1-18 (MKRFVSVVALSGVVSLAG) are cleaved as a signal peptide. Cysteine 19 carries N-palmitoyl cysteine lipidation. Cysteine 19 is lipidated: S-diacylglycerol cysteine.

The protein belongs to the FlgH family. As to quaternary structure, the basal body constitutes a major portion of the flagellar organelle and consists of four rings (L,P,S, and M) mounted on a central rod.

It localises to the cell outer membrane. It is found in the bacterial flagellum basal body. Functionally, assembles around the rod to form the L-ring and probably protects the motor/basal body from shearing forces during rotation. The protein is Flagellar L-ring protein of Pseudomonas fluorescens (strain Pf0-1).